The primary structure comprises 274 residues: MNPEHSPLGKATVYAAQYDASLLFPIPRAGAREQLGITSALPFFGTDIWNAYELSWLNARGKPQLAVATFYVPAESPNIVESKSFKLYLGSFAQSKFDSLDAVRDTLKRDVSAACGASVSVQLVSPHDFGKLQMEELDGLSLDRLDLDTDVYEPDPSLLSAAQEEAPVEETLVSDLLRSNCPVTGQPDWGSVQIHYVGPQIDHAGLLRYIISFRNHTGFHEQCVERIFLDILHACKPLKLAVYARYTRRGGLDINPFRTNYNQPMPDNARTARQ.

Residue 80 to 82 (VES) coordinates substrate. An NADPH-binding site is contributed by 82-83 (SK). Residue C181 is the Thioimide intermediate of the active site. D188 (proton donor) is an active-site residue. 220–221 (HE) provides a ligand contact to substrate. 249–250 (RG) lines the NADPH pocket.

This sequence belongs to the GTP cyclohydrolase I family. QueF type 2 subfamily. Homodimer.

The protein localises to the cytoplasm. It catalyses the reaction 7-aminomethyl-7-carbaguanine + 2 NADP(+) = 7-cyano-7-deazaguanine + 2 NADPH + 3 H(+). Its pathway is tRNA modification; tRNA-queuosine biosynthesis. Catalyzes the NADPH-dependent reduction of 7-cyano-7-deazaguanine (preQ0) to 7-aminomethyl-7-deazaguanine (preQ1). This is NADPH-dependent 7-cyano-7-deazaguanine reductase from Burkholderia ambifaria (strain MC40-6).